A 321-amino-acid chain; its full sequence is Phospho-N-acetylmuramoyl-pentapeptide-transferase (321 aa).

Transmembrane regions (helical) follow at residues 6 to 26 (MLIP…LFIG), 53 to 73 (TMGG…VGIW), 77 to 97 (LTLS…LGFY), 121 to 141 (ILGA…HTLW), 144 to 164 (IIGN…WLVG), 175 to 195 (LDGL…IIAA), 200 to 220 (TDVL…LMFN), 226 to 246 (IFMG…VAIL), 251 to 271 (WSLL…ILQV), and 301 to 321 (IDLT…AFFL).

It belongs to the glycosyltransferase 4 family. MraY subfamily. Requires Mg(2+) as cofactor.

Its subcellular location is the cell membrane. It catalyses the reaction UDP-N-acetyl-alpha-D-muramoyl-L-alanyl-gamma-D-glutamyl-L-lysyl-D-alanyl-D-alanine + di-trans,octa-cis-undecaprenyl phosphate = Mur2Ac(oyl-L-Ala-gamma-D-Glu-L-Lys-D-Ala-D-Ala)-di-trans,octa-cis-undecaprenyl diphosphate + UMP. It participates in cell wall biogenesis; peptidoglycan biosynthesis. Catalyzes the initial step of the lipid cycle reactions in the biosynthesis of the cell wall peptidoglycan: transfers peptidoglycan precursor phospho-MurNAc-pentapeptide from UDP-MurNAc-pentapeptide onto the lipid carrier undecaprenyl phosphate, yielding undecaprenyl-pyrophosphoryl-MurNAc-pentapeptide, known as lipid I. In Lacticaseibacillus paracasei (strain ATCC 334 / BCRC 17002 / CCUG 31169 / CIP 107868 / KCTC 3260 / NRRL B-441) (Lactobacillus paracasei), this protein is Phospho-N-acetylmuramoyl-pentapeptide-transferase.